The chain runs to 325 residues: Tetraacyldisaccharide 4'-kinase (325 aa).

Thr-55–Thr-62 provides a ligand contact to ATP.

The protein belongs to the LpxK family.

The enzyme catalyses a lipid A disaccharide + ATP = a lipid IVA + ADP + H(+). It functions in the pathway glycolipid biosynthesis; lipid IV(A) biosynthesis; lipid IV(A) from (3R)-3-hydroxytetradecanoyl-[acyl-carrier-protein] and UDP-N-acetyl-alpha-D-glucosamine: step 6/6. Functionally, transfers the gamma-phosphate of ATP to the 4'-position of a tetraacyldisaccharide 1-phosphate intermediate (termed DS-1-P) to form tetraacyldisaccharide 1,4'-bis-phosphate (lipid IVA). In Cronobacter sakazakii (strain ATCC BAA-894) (Enterobacter sakazakii), this protein is Tetraacyldisaccharide 4'-kinase.